Here is a 254-residue protein sequence, read N- to C-terminus: tRNA threonylcarbamoyladenosine dehydratase (254 aa).

It belongs to the HesA/MoeB/ThiF family.

In terms of biological role, catalyzes the ATP-dependent dehydration of threonylcarbamoyladenosine at position 37 (t(6)A37) to form cyclic t(6)A37 (ct(6)A37) in tRNAs that read codons beginning with adenine. This chain is tRNA threonylcarbamoyladenosine dehydratase (tcdA), found in Bacillus subtilis (strain 168).